Consider the following 224-residue polypeptide: UPF0758 protein Pmen_4376 (224 aa).

The 123-residue stretch at 102–224 folds into the MPN domain; that stretch reads ALESPQAVRD…PLSMAELGWM (123 aa). Residues histidine 173, histidine 175, and aspartate 186 each contribute to the Zn(2+) site. The JAMM motif signature appears at 173–186; the sequence is HNHPSGVCEPSQAD.

Belongs to the UPF0758 family.

The chain is UPF0758 protein Pmen_4376 from Ectopseudomonas mendocina (strain ymp) (Pseudomonas mendocina).